The primary structure comprises 139 residues: Centromere protein S (139 aa).

A disordered region spans residues Glu99–Ala139. The span at Lys110 to Gly120 shows a compositional bias: basic residues.

Belongs to the TAF9 family. CENP-S/MHF1 subfamily. As to quaternary structure, heterodimer with CENPX, sometimes called MHF; this interaction stabilizes both partners. MHF heterodimers can assemble to form tetrameric structures. MHF also coassemble with CENPT-CENPW heterodimers at centromeres to form the tetrameric CENP-T-W-S-X complex. Forms a discrete complex with FANCM and CENPX, called FANCM-MHF; this interaction, probably mediated by direct binding between CENPS and FANCM, leads to synergistic activation of double-stranded DNA binding and strongly stimulates FANCM-mediated DNA remodeling. Recruited by FANCM to the Fanconi anemia (FA) core complex, which consists of CENPS, CENPX, FANCA, FANCB, FANCC, FANCE, FANCF, FANCG, FANCL, FANCM, FAAP24 and FAAP100. The FA core complex associates with Bloom syndrome (BLM) complex, which consists of at least BLM, DNA topoisomerase 3-alpha (TOP3A), RMI1/BLAP75, RPA1/RPA70 and RPA2/RPA32. The super complex between FA and BLM is called BRAFT. Component of the CENPA-CAD complex, composed of CENPI, CENPK, CENPL, CENPO, CENPP, CENPQ, CENPR and CENPS. The CENPA-CAD complex is probably recruited on centromeres by the CENPA-NAC complex, at least composed of CENPA, CENPC, CENPH, CENPM, CENPN, CENPT and CENPU.

The protein localises to the nucleus. The protein resides in the chromosome. Its subcellular location is the centromere. It localises to the kinetochore. Its function is as follows. DNA-binding component of the Fanconi anemia (FA) core complex. Required for the normal activation of the FA pathway, leading to monoubiquitination of the FANCI-FANCD2 complex in response to DNA damage, cellular resistance to DNA cross-linking drugs, and prevention of chromosomal breakage. In complex with CENPX (MHF heterodimer), crucial cofactor for FANCM in both binding and ATP-dependent remodeling of DNA. Stabilizes FANCM. In complex with CENPX and FANCM (but not other FANC proteins), rapidly recruited to blocked forks and promotes gene conversion at blocked replication forks. In complex with CENPT, CENPW and CENPX (CENP-T-W-S-X heterotetramer), involved in the formation of a functional kinetochore outer plate, which is essential for kinetochore-microtubule attachment and faithful mitotic progression. As a component of MHF and CENP-T-W-S-X complexes, binds DNA and bends it to form a nucleosome-like structure. DNA-binding function is fulfilled in the presence of CENPX, with the following preference for DNA substates: Holliday junction &gt; double-stranded &gt; splay arm &gt; single-stranded. Does not bind DNA on its own. This is Centromere protein S (CENPS) from Gallus gallus (Chicken).